The chain runs to 131 residues: MSMSDPIADMLTRIRNGQQAQKASVTMPSSKVKVAIAKVLQDEGYIEGFSVREGEGKAVLDVALKYYAGRPVIERIERVSRPGLRVYKGTDDLPRVMNGLGVAIVSTPKGVMTDRAARASHVGGEVICLVA.

This sequence belongs to the universal ribosomal protein uS8 family. In terms of assembly, part of the 30S ribosomal subunit. Contacts proteins S5 and S12.

Its function is as follows. One of the primary rRNA binding proteins, it binds directly to 16S rRNA central domain where it helps coordinate assembly of the platform of the 30S subunit. This chain is Small ribosomal subunit protein uS8, found in Azoarcus sp. (strain BH72).